Here is a 475-residue protein sequence, read N- to C-terminus: Ribulose bisphosphate carboxylase large chain (475 aa).

Positions 1–2 (MA) are excised as a propeptide. Position 3 is an N-acetylproline (Pro3). Substrate is bound by residues Asn123 and Thr173. The Proton acceptor role is filled by Lys175. Substrate is bound at residue Lys177. Positions 201, 203, and 204 each coordinate Mg(2+). N6-carboxylysine is present on Lys201. His294 acts as the Proton acceptor in catalysis. Substrate-binding residues include Arg295, His327, and Ser379.

This sequence belongs to the RuBisCO large chain family. Type I subfamily. Heterohexadecamer of 8 large chains and 8 small chains. Requires Mg(2+) as cofactor.

It is found in the plastid. The protein resides in the chloroplast. The enzyme catalyses 2 (2R)-3-phosphoglycerate + 2 H(+) = D-ribulose 1,5-bisphosphate + CO2 + H2O. The catalysed reaction is D-ribulose 1,5-bisphosphate + O2 = 2-phosphoglycolate + (2R)-3-phosphoglycerate + 2 H(+). RuBisCO catalyzes two reactions: the carboxylation of D-ribulose 1,5-bisphosphate, the primary event in carbon dioxide fixation, as well as the oxidative fragmentation of the pentose substrate in the photorespiration process. Both reactions occur simultaneously and in competition at the same active site. This chain is Ribulose bisphosphate carboxylase large chain, found in Ostreococcus tauri.